The chain runs to 261 residues: Cytochrome c oxidase subunit 3 (261 aa).

Residues 1 to 15 lie on the Mitochondrial matrix side of the membrane; it reads MTHQTHAYHMVNPSP. Residues 16 to 34 traverse the membrane as a helical segment; the sequence is WPLTGALSALLLTSGLIMW. Residues 35-40 are Mitochondrial intermembrane-facing; the sequence is FHFNSF. A helical membrane pass occupies residues 41-66; sequence LLVIIGLTCMLLTMYQWWRDIVREGT. Residues 67 to 72 lie on the Mitochondrial matrix side of the membrane; it reads FQGHHT. A helical transmembrane segment spans residues 73-105; sequence PVVQKGLRYGMVLFIVSEVFFFLGFFWAFYHSS. At 106–128 the chain is on the mitochondrial intermembrane side; the sequence is LAPTPELGGCWPPTGIHPLNPLE. The helical transmembrane segment at 129–152 threads the bilayer; sequence VPLLNTSILLASGVSITWAHHSLM. Topologically, residues 153–155 are mitochondrial matrix; it reads EGN. The helical transmembrane segment at 156 to 183 threads the bilayer; that stretch reads RKQMIQALSITILLGIYFTILQASEYYE. Residues 184 to 190 are Mitochondrial intermembrane-facing; sequence SSFTISD. The chain crosses the membrane as a helical span at residues 191-223; it reads GVYGSTFFVATGFHGLHVIIGTTFLIVCLLRQF. Residues 224-232 lie on the Mitochondrial matrix side of the membrane; it reads NFHFTSTHH. Residues 233–256 traverse the membrane as a helical segment; the sequence is FGFEAAAWYWHFVDVVWLFLYVSI. The Mitochondrial intermembrane segment spans residues 257 to 261; the sequence is YWWGS.

Belongs to the cytochrome c oxidase subunit 3 family. In terms of assembly, component of the cytochrome c oxidase (complex IV, CIV), a multisubunit enzyme composed of 14 subunits. The complex is composed of a catalytic core of 3 subunits MT-CO1, MT-CO2 and MT-CO3, encoded in the mitochondrial DNA, and 11 supernumerary subunits COX4I, COX5A, COX5B, COX6A, COX6B, COX6C, COX7A, COX7B, COX7C, COX8 and NDUFA4, which are encoded in the nuclear genome. The complex exists as a monomer or a dimer and forms supercomplexes (SCs) in the inner mitochondrial membrane with NADH-ubiquinone oxidoreductase (complex I, CI) and ubiquinol-cytochrome c oxidoreductase (cytochrome b-c1 complex, complex III, CIII), resulting in different assemblies (supercomplex SCI(1)III(2)IV(1) and megacomplex MCI(2)III(2)IV(2)).

It is found in the mitochondrion inner membrane. The enzyme catalyses 4 Fe(II)-[cytochrome c] + O2 + 8 H(+)(in) = 4 Fe(III)-[cytochrome c] + 2 H2O + 4 H(+)(out). Component of the cytochrome c oxidase, the last enzyme in the mitochondrial electron transport chain which drives oxidative phosphorylation. The respiratory chain contains 3 multisubunit complexes succinate dehydrogenase (complex II, CII), ubiquinol-cytochrome c oxidoreductase (cytochrome b-c1 complex, complex III, CIII) and cytochrome c oxidase (complex IV, CIV), that cooperate to transfer electrons derived from NADH and succinate to molecular oxygen, creating an electrochemical gradient over the inner membrane that drives transmembrane transport and the ATP synthase. Cytochrome c oxidase is the component of the respiratory chain that catalyzes the reduction of oxygen to water. Electrons originating from reduced cytochrome c in the intermembrane space (IMS) are transferred via the dinuclear copper A center (CU(A)) of subunit 2 and heme A of subunit 1 to the active site in subunit 1, a binuclear center (BNC) formed by heme A3 and copper B (CU(B)). The BNC reduces molecular oxygen to 2 water molecules using 4 electrons from cytochrome c in the IMS and 4 protons from the mitochondrial matrix. This is Cytochrome c oxidase subunit 3 (MT-CO3) from Osphranter robustus (Wallaroo).